The sequence spans 207 residues: Uridine kinase (207 aa).

11–18 is an ATP binding site; that stretch reads GGSGSGKT.

This sequence belongs to the uridine kinase family.

Its subcellular location is the cytoplasm. It catalyses the reaction uridine + ATP = UMP + ADP + H(+). The enzyme catalyses cytidine + ATP = CMP + ADP + H(+). It functions in the pathway pyrimidine metabolism; CTP biosynthesis via salvage pathway; CTP from cytidine: step 1/3. It participates in pyrimidine metabolism; UMP biosynthesis via salvage pathway; UMP from uridine: step 1/1. This Staphylococcus aureus (strain Mu3 / ATCC 700698) protein is Uridine kinase.